A 247-amino-acid chain; its full sequence is Ubiquinone biosynthesis O-methyltransferase (247 aa).

Positions 39, 70, 91, and 134 each coordinate S-adenosyl-L-methionine.

It belongs to the methyltransferase superfamily. UbiG/COQ3 family.

The catalysed reaction is a 3-demethylubiquinol + S-adenosyl-L-methionine = a ubiquinol + S-adenosyl-L-homocysteine + H(+). The enzyme catalyses a 3-(all-trans-polyprenyl)benzene-1,2-diol + S-adenosyl-L-methionine = a 2-methoxy-6-(all-trans-polyprenyl)phenol + S-adenosyl-L-homocysteine + H(+). Its pathway is cofactor biosynthesis; ubiquinone biosynthesis. O-methyltransferase that catalyzes the 2 O-methylation steps in the ubiquinone biosynthetic pathway. The sequence is that of Ubiquinone biosynthesis O-methyltransferase from Cereibacter sphaeroides (strain KD131 / KCTC 12085) (Rhodobacter sphaeroides).